The chain runs to 438 residues: Aspartate--tRNA(Asp/Asn) ligase (438 aa).

Glu176 contacts L-aspartate. The segment at 198-201 (QLYK) is aspartate. Residue Arg220 coordinates L-aspartate. ATP-binding positions include 220 to 222 (RAE), 228 to 230 (RHL), and Glu361. Positions 361 and 364 each coordinate Mg(2+). 2 residues coordinate L-aspartate: Ser364 and Arg368. ATP is bound at residue 409–412 (GADR).

This sequence belongs to the class-II aminoacyl-tRNA synthetase family. Type 2 subfamily. In terms of assembly, homodimer. The cofactor is Mg(2+).

It is found in the cytoplasm. The enzyme catalyses tRNA(Asx) + L-aspartate + ATP = L-aspartyl-tRNA(Asx) + AMP + diphosphate. Its function is as follows. Aspartyl-tRNA synthetase with relaxed tRNA specificity since it is able to aspartylate not only its cognate tRNA(Asp) but also tRNA(Asn). Reaction proceeds in two steps: L-aspartate is first activated by ATP to form Asp-AMP and then transferred to the acceptor end of tRNA(Asp/Asn). This is Aspartate--tRNA(Asp/Asn) ligase from Methanococcus maripaludis (strain DSM 14266 / JCM 13030 / NBRC 101832 / S2 / LL).